Reading from the N-terminus, the 90-residue chain is Large ribosomal subunit protein bL31B (90 aa).

It belongs to the bacterial ribosomal protein bL31 family. Type B subfamily. In terms of assembly, part of the 50S ribosomal subunit.

The polypeptide is Large ribosomal subunit protein bL31B (Pseudomonas fluorescens (strain SBW25)).